The following is an 840-amino-acid chain: Protein argonaute-2 (840 aa).

Residues 210 to 329 form the PAZ domain; it reads PVIEFVCEVL…LPLEVCNIVA (120 aa). At Ser368 the chain carries Phosphoserine. A Piwi domain is found at 498–799; the sequence is LVVVILPGKT…VAFRARYHLV (302 aa). Residues Asp578 and Asp650 each coordinate a divalent metal cation. The residue at position 681 (Pro681) is a 4-hydroxyproline. An a divalent metal cation-binding site is contributed by His788. A phosphoserine mark is found at Ser805, Ser809, Ser812, and Ser815.

It belongs to the argonaute family. Ago subfamily. Interacts with DICER1 through its Piwi domain and with TARBP2 during assembly of the RNA-induced silencing complex (RISC). Together, DICER1, AGO2 and TARBP2 constitute the trimeric RISC loading complex (RLC), or micro-RNA (miRNA) loading complex (miRLC). Within the RLC/miRLC, DICER1 and TARBP2 are required to process precursor miRNAs (pre-miRNAs) to mature miRNAs and then load them onto AGO2. AGO2 bound to the mature miRNA constitutes the minimal RISC and may subsequently dissociate from DICER1 and TARBP2. Note however that the term RISC has also been used to describe the trimeric RLC/miRLC. The formation of RISC complexes containing siRNAs rather than miRNAs appears to occur independently of DICER1. Interacts with AGO1. Also interacts with DDB1, DDX5, DDX6, DDX20, DHX30, DHX36, DDX47, DHX9, ELAVL, FXR1, GEMIN4, HNRNPF, IGF2BP1, ILF3, IMP8, MATR3, PABPC1, PRMT5, P4HA1, P4HB, RBM4, SART3, TNRC6A, TNRC6B, UPF1 and YBX1. Interacts with the P-body components DCP1A and XRN1. Associates with polysomes and messenger ribonucleoproteins (mNRPs). Interacts with RBM4; the interaction is modulated under stress-induced conditions, occurs under both cell proliferation and differentiation conditions and in an RNA- and phosphorylation-independent manner. Interacts with LIMD1, WTIP and AJUBA. Interacts with TRIM71; the interaction increases in presence of RNA. Interacts with APOBEC3G in an RNA-dependent manner. Interacts with APOBEC3A, APOBEC3C, APOBEC3F and APOBEC3H. Interacts with DICER1, TARBP2, EIF6, MOV10 and RPL7A (60S ribosome subunit); they form a large RNA-induced silencing complex (RISC). Interacts with FMR1. Interacts with ZFP36. Interacts with RC3H1; the interaction is RNA independent. Found in a complex composed of AGO2, CHD7 and ARB2A. Interacts with SND1 and SYT11. Interacts with CLNK. Interacts with GARRE1. Hydroxylated. 4-hydroxylation appears to enhance protein stability but is not required for miRNA-binding or endonuclease activity. Post-translationally, ubiquitinated on surface-exposed lysines by a SCF-like E3 ubiquitin-protein ligase complex containing ZSWIM8 during target-directed microRNA degradation (TDMD), a process that mediates degradation of microRNAs (miRNAs). Ubiquitination by the SCF-like E3 ubiquitin-protein ligase complex containing ZSWIM8 leads to its subsequent degradation, thereby exposing miRNAs for degradation. ZSWIM8 recognizes and binds AGO2 when it is engaged with a TDMD target. In terms of processing, phosphorylation at Ser-368 by AKT3; leads to up-regulate translational repression of microRNA target and down-regulate endonucleolytic cleavage. A phosphorylation cycle of C-terminal serine cluster (Ser-805-Ser-815) regulates the release of target mRNAs. Target-binding leads to phosphorylation of these residues by CSNK1A1, which reduces the affinity of AGO2 for mRNA and enables target release. The ANKRD52-PPP6C phosphatase complex dephosphorylates the residues, which primes AGO2 for binding a new target.

The protein resides in the cytoplasm. The protein localises to the P-body. Its subcellular location is the nucleus. The enzyme catalyses Endonucleolytic cleavage to 5'-phosphomonoester.. Functionally, required for RNA-mediated gene silencing (RNAi) by the RNA-induced silencing complex (RISC). The 'minimal RISC' appears to include AGO2 bound to a short guide RNA such as a microRNA (miRNA) or short interfering RNA (siRNA). These guide RNAs direct RISC to complementary mRNAs that are targets for RISC-mediated gene silencing. The precise mechanism of gene silencing depends on the degree of complementarity between the miRNA or siRNA and its target. Binding of RISC to a perfectly complementary mRNA generally results in silencing due to endonucleolytic cleavage of the mRNA specifically by AGO2. Binding of RISC to a partially complementary mRNA results in silencing through inhibition of translation, and this is independent of endonuclease activity. May inhibit translation initiation by binding to the 7-methylguanosine cap, thereby preventing the recruitment of the translation initiation factor eIF4-E. May also inhibit translation initiation via interaction with EIF6, which itself binds to the 60S ribosomal subunit and prevents its association with the 40S ribosomal subunit. The inhibition of translational initiation leads to the accumulation of the affected mRNA in cytoplasmic processing bodies (P-bodies), where mRNA degradation may subsequently occur. In some cases RISC-mediated translational repression is also observed for miRNAs that perfectly match the 3' untranslated region (3'-UTR). Can also up-regulate the translation of specific mRNAs under certain growth conditions. Binds to the AU element of the 3'-UTR of the TNF (TNF-alpha) mRNA and up-regulates translation under conditions of serum starvation. Also required for transcriptional gene silencing (TGS), in which short RNAs known as antigene RNAs or agRNAs direct the transcriptional repression of complementary promoter regions. The protein is Protein argonaute-2 (AGO2) of Oryctolagus cuniculus (Rabbit).